Consider the following 193-residue polypeptide: Ion-translocating oxidoreductase complex subunit A (193 aa).

Transmembrane regions (helical) follow at residues 5-25 (LLLF…FLGL), 39-59 (MGMG…AWLI), 63-83 (ILIP…VIAV), 102-122 (LLGI…VALL), 134-154 (ALYG…FAAI), and 171-191 (AIAL…SGLV).

This sequence belongs to the NqrDE/RnfAE family. The complex is composed of six subunits: RsxA, RsxB, RsxC, RsxD, RsxE and RsxG.

The protein localises to the cell inner membrane. Functionally, part of a membrane-bound complex that couples electron transfer with translocation of ions across the membrane. Required to maintain the reduced state of SoxR. This chain is Ion-translocating oxidoreductase complex subunit A, found in Escherichia fergusonii (strain ATCC 35469 / DSM 13698 / CCUG 18766 / IAM 14443 / JCM 21226 / LMG 7866 / NBRC 102419 / NCTC 12128 / CDC 0568-73).